The chain runs to 66 residues: Toxin Tppa2 (66 aa).

The 63-residue stretch at 1–63 (KDGYLVGNDG…TWSRATNKCG (63 aa)) folds into the LCN-type CS-alpha/beta domain. Cystine bridges form between C11-C62, C15-C37, C23-C43, and C27-C45. Residue C62 is modified to Cysteine amide.

It belongs to the long (4 C-C) scorpion toxin superfamily. Sodium channel inhibitor family. Beta subfamily. As to expression, expressed by the venom gland.

The protein localises to the secreted. Functionally, beta toxins bind voltage-independently at site-4 of sodium channels (Nav) and shift the voltage of activation toward more negative potentials thereby affecting sodium channel activation and promoting spontaneous and repetitive firing. The sequence is that of Toxin Tppa2 from Tityus pachyurus (Colombian scorpion).